A 614-amino-acid chain; its full sequence is MIKKASLLTACSVTAFSAWAQDTSPDTLVVTANRFEQPRSTVLAPTTVVTRQDIDRWQSTSVNDVLRRLPGVDITQNGGSGQLSSIFIRGTNASHVLVLIDGVRLNLAGVSGSADLSQFPIALVQRVEYIRGPRSAVYGSDAIGGVVNIITTRDHPGTEISAGWGSNSYQNYDVSTQQQLGDKTRVTLLGDYAHTHGYDVVAYGNTGTQAQPDNDGFLSKTLYGALEHNFTDVWSGFVRGYGYDNRTNYDAYYSPGLPLVDTRKLYSQSWDAGLRYNGELIKSQLITSYSHSKDYNYDPHYGRYDSSATLDEMKQYTVQWANNIIIGHGNIGAGVDWQKQSTAPGTAYVEDGYDQRNTGIYLTGLQQVGDFTFEGAGRSDDNSQFGRHGTWQTSAGWEFIEGYRFIASYGTSYKAPNLGQLYGTYGNPNLNPEKSKQWEGAFEGLTAGVNWRISGYRNDVSDLIDYDDHTLKYYNEGKARIKGVEATANFDTGPLTHTVSYDYVDARNAITDTPLLRRAKQQVKYQLDWQLYDFDWGITYQYLGTRYDKDYSSYPYQTVKMGGVSLWDLAVAYPVTSHLTVRGKIANLFDKDYETVYGYQTAGREYTLSGSYTF.

The first 20 residues, 1–20 (MIKKASLLTACSVTAFSAWA), serve as a signal peptide directing secretion. Positions 26 to 33 (DTLVVTAN) match the TonB box motif. In terms of domain architecture, TBDR plug spans 38–152 (PRSTVLAPTT…IGGVVNIITT (115 aa)). Residues Leu83, Ser85, Asn92, and 110 to 111 (VS) contribute to the cyanocob(III)alamin site. One can recognise a TBDR beta-barrel domain in the interval 155 to 614 (HPGTEISAGW…EYTLSGSYTF (460 aa)). The next 3 beta stranded transmembrane spans lie at 158–165 (TEISAGWG), 169–178 (YQNYDVSTQQ), and 184–195 (TRVTLLGDYAHT). Ca(2+) is bound by residues Asp199, Gln211, Asp213, and Asp215. 2 beta stranded membrane-spanning segments follow: residues 217–227 (FLSKTLYGALE) and 232–248 (DVWS…NRTN). The Ca(2+) site is built by Tyr249 and Asp250. Ala251 lines the cyanocob(III)alamin pocket. Asp261 lines the Ca(2+) pocket. 14 consecutive transmembrane segments (beta stranded) span residues 263 to 277 (RKLY…LRYN), 279 to 296 (ELIK…KDYN), 309 to 325 (TLDE…NNII), 328 to 337 (HGNIGAGVDW), 353 to 369 (YDQR…QQVG), 371 to 381 (FTFEGAGRSDD), 385 to 400 (FGRH…WEFI), 403 to 417 (YRFI…KAPN), 434 to 443 (KSKQWEGAFE), 449 to 458 (VNWRISGYRN), 473 to 490 (YYNE…TANF), 494 to 509 (PLTH…ARNA), 517 to 529 (RRAK…QLDW), and 535 to 550 (DWGI…YDKD). Position 309 (Thr309) interacts with cyanocob(III)alamin. Cyanocob(III)alamin is bound at residue Arg517. Tyr551 contributes to the cyanocob(III)alamin binding site. The next 3 beta stranded transmembrane spans lie at 558–572 (TVKM…LAVA), 585–596 (IANLFDKDYETV), and 602–614 (AGRE…SYTF). Residues 597–614 (YGYQTAGREYTLSGSYTF) carry the TonB C-terminal box motif.

Belongs to the TonB-dependent receptor family. BtuB (TC 1.B.14.3.1) subfamily.

It is found in the cell outer membrane. Its function is as follows. Involved in the active translocation of vitamin B12 (cyanocobalamin) across the outer membrane to the periplasmic space. It derives its energy for transport by interacting with the trans-periplasmic membrane protein TonB. The chain is Vitamin B12 transporter BtuB from Escherichia coli O1:K1 / APEC.